A 455-amino-acid polypeptide reads, in one-letter code: Squamosa promoter-binding-like protein 16 (455 aa).

An SBP-type zinc finger spans residues 115–192 (CPSCAVDGCK…DGHNRRRRKP (78 aa)). Zn(2+) contacts are provided by Cys118, Cys123, Cys140, His143, Cys159, Cys162, His166, and Cys178. The Bipartite nuclear localization signal signature appears at 175–191 (KRSCRKRLDGHNRRRRK). The tract at residues 182 to 204 (LDGHNRRRRKPQPDPMNSASYLA) is disordered.

Expressed in young panicles.

The protein resides in the nucleus. Its function is as follows. Trans-acting factor that binds specifically to the consensus nucleotide sequence 5'-TNCGTACAA-3'. May be involved in panicle development. In Oryza sativa subsp. japonica (Rice), this protein is Squamosa promoter-binding-like protein 16 (SPL16).